The primary structure comprises 100 residues: Small ribosomal subunit protein uS14 (100 aa).

This sequence belongs to the universal ribosomal protein uS14 family. In terms of assembly, part of the 30S ribosomal subunit. Contacts proteins S3 and S10.

Functionally, binds 16S rRNA, required for the assembly of 30S particles and may also be responsible for determining the conformation of the 16S rRNA at the A site. In Trichodesmium erythraeum (strain IMS101), this protein is Small ribosomal subunit protein uS14.